A 191-amino-acid polypeptide reads, in one-letter code: 3-isopropylmalate dehydratase small subunit (191 aa).

This sequence belongs to the LeuD family. LeuD type 1 subfamily. Heterodimer of LeuC and LeuD.

It carries out the reaction (2R,3S)-3-isopropylmalate = (2S)-2-isopropylmalate. The protein operates within amino-acid biosynthesis; L-leucine biosynthesis; L-leucine from 3-methyl-2-oxobutanoate: step 2/4. Functionally, catalyzes the isomerization between 2-isopropylmalate and 3-isopropylmalate, via the formation of 2-isopropylmaleate. This is 3-isopropylmalate dehydratase small subunit from Anaeromyxobacter dehalogenans (strain 2CP-1 / ATCC BAA-258).